Here is a 158-residue protein sequence, read N- to C-terminus: MALRTIRVEGDPVLGKVCREVTEVTPKIVTLIDDMLETMYEANGVGLAAPQVGILKRIVVIDVGEGPIVMINPEIIESDGEQTGDEGCLSVPGKAGQVTRPNYVKARFMGEDMNEYEIEGEELLARCICHELDHLDGHLYVEKVEGALHDVTYEDTQE.

Cysteine 88 and histidine 130 together coordinate Fe cation. The active site involves glutamate 131. Histidine 134 contributes to the Fe cation binding site.

It belongs to the polypeptide deformylase family. The cofactor is Fe(2+).

It carries out the reaction N-terminal N-formyl-L-methionyl-[peptide] + H2O = N-terminal L-methionyl-[peptide] + formate. Functionally, removes the formyl group from the N-terminal Met of newly synthesized proteins. Requires at least a dipeptide for an efficient rate of reaction. N-terminal L-methionine is a prerequisite for activity but the enzyme has broad specificity at other positions. The protein is Peptide deformylase of Agathobacter rectalis (strain ATCC 33656 / DSM 3377 / JCM 17463 / KCTC 5835 / VPI 0990) (Eubacterium rectale).